Consider the following 1079-residue polypeptide: Isoleucine--tRNA ligase (1079 aa).

Positions 53–63 (PFANGLPHYGH) match the 'HIGH' region motif. A 'KMSKS' region motif is present at residues 611-615 (KLSKR). K614 lines the ATP pocket.

Belongs to the class-I aminoacyl-tRNA synthetase family. IleS type 2 subfamily. Monomer. Requires Zn(2+) as cofactor.

The protein localises to the cytoplasm. It catalyses the reaction tRNA(Ile) + L-isoleucine + ATP = L-isoleucyl-tRNA(Ile) + AMP + diphosphate. Its function is as follows. Catalyzes the attachment of isoleucine to tRNA(Ile). As IleRS can inadvertently accommodate and process structurally similar amino acids such as valine, to avoid such errors it has two additional distinct tRNA(Ile)-dependent editing activities. One activity is designated as 'pretransfer' editing and involves the hydrolysis of activated Val-AMP. The other activity is designated 'posttransfer' editing and involves deacylation of mischarged Val-tRNA(Ile). The polypeptide is Isoleucine--tRNA ligase (Rickettsia canadensis (strain McKiel)).